Reading from the N-terminus, the 644-residue chain is Core protein VP4 (644 aa).

This sequence belongs to the orbivirus VP4 family.

The protein resides in the virion. Functionally, the VP4 protein is one of the five proteins (with VP1, VP3, VP6 and VP7) which form the inner capsid of the virus. In Bluetongue virus 2 (isolate USA) (BTV 2), this protein is Core protein VP4 (Segment-4).